The sequence spans 591 residues: Potassium-transporting ATPase potassium-binding subunit (591 aa).

Transmembrane regions (helical) follow at residues 6–26 (WFQILLFLGLILAVTKPLGVF), 63–83 (WTEYAIAMLLFSAVSMLMLYI), 137–157 (GLAYHNFMSAAVGIAIAIAFI), 179–199 (VLWVLLPFCIMGALALVSQGV), 272–292 (LSNLIEMFSIFAISAGLTYTL), 303–323 (WAVWGAMAALFLVGVSVVYWA), 405–425 (AGMYGMLIYIVLAVFIAGLMV), 444–464 (AMLVALIFPLIILVFSAISSV), 510–530 (VAIGIAMLGGRFLMIIPMLAI), and 553–573 (LFSVLLIGTIIIIGALTFFPA).

It belongs to the KdpA family. The system is composed of three essential subunits: KdpA, KdpB and KdpC.

The protein resides in the cell inner membrane. Functionally, part of the high-affinity ATP-driven potassium transport (or Kdp) system, which catalyzes the hydrolysis of ATP coupled with the electrogenic transport of potassium into the cytoplasm. This subunit binds the periplasmic potassium ions and delivers the ions to the membrane domain of KdpB through an intramembrane tunnel. In Koribacter versatilis (strain Ellin345), this protein is Potassium-transporting ATPase potassium-binding subunit.